We begin with the raw amino-acid sequence, 621 residues long: F-box/LRR-repeat protein 4 (621 aa).

Asymmetric dimethylarginine is present on Arg28. One can recognise an F-box domain in the interval 277-332 (NGYFDKLPYELIQLILNHLTLPDLCRLAQTCKLLSQHCCDPLQYIHLNLQPYWAKL). LRR repeat units follow at residues 376–397 (ELVR…EVIS), 402–421 (NLQA…AFNH), 427–448 (SLKR…SILN), 452–474 (ELQH…ASMI), 480–501 (KLRT…AELA), 504–524 (CPLL…STGC), 532–558 (LPNL…ACNC), 559–583 (TRLQ…LLES), and 584–609 (CKDL…LNAS).

As to quaternary structure, part of a SCF (SKP1-CUL1-F-box) protein ligase complex. Interacts with VCP. Interacts with PPTC7; this interaction promotes destruction of BNIP3 and NIX and mitophagy suppression. In terms of tissue distribution, expressed in heart, kidney, liver, lung, pancreas, and placenta, but not in skeletal muscle.

The protein resides in the cytoplasm. Its subcellular location is the nucleus. It localises to the mitochondrion outer membrane. In terms of biological role, substrate-recognition component of the mitochondria-localized SCF-FBXL4 ubiquitin E3 ligase complex that plays a role in the restriction of mitophagy by controlling the degradation of BNIP3 and NIX mitophagy receptors. Rescues also mitochondrial injury through reverting hyperactivation of DRP1-mediated mitochondrial fission. This Homo sapiens (Human) protein is F-box/LRR-repeat protein 4 (FBXL4).